Here is a 300-residue protein sequence, read N- to C-terminus: Putative S-adenosyl-L-methionine-dependent methyltransferase Mkms_0379 (300 aa).

S-adenosyl-L-methionine is bound by residues Asp-128 and 157–158 (DL).

The protein belongs to the UPF0677 family.

In terms of biological role, exhibits S-adenosyl-L-methionine-dependent methyltransferase activity. This chain is Putative S-adenosyl-L-methionine-dependent methyltransferase Mkms_0379, found in Mycobacterium sp. (strain KMS).